A 45-amino-acid polypeptide reads, in one-letter code: Photosystem I reaction center subunit IX 1 (45 aa).

A helical transmembrane segment spans residues 9–29; the sequence is WFRSAPVVATIWITLTAGIIV.

It belongs to the PsaJ family.

The protein resides in the cellular thylakoid membrane. May help in the organization of the PsaE and PsaF subunits. The sequence is that of Photosystem I reaction center subunit IX 1 from Prochlorococcus marinus (strain NATL1A).